The primary structure comprises 440 residues: Thymidine phosphorylase (440 aa).

Belongs to the thymidine/pyrimidine-nucleoside phosphorylase family. In terms of assembly, homodimer.

The enzyme catalyses thymidine + phosphate = 2-deoxy-alpha-D-ribose 1-phosphate + thymine. It participates in pyrimidine metabolism; dTMP biosynthesis via salvage pathway; dTMP from thymine: step 1/2. Functionally, the enzymes which catalyze the reversible phosphorolysis of pyrimidine nucleosides are involved in the degradation of these compounds and in their utilization as carbon and energy sources, or in the rescue of pyrimidine bases for nucleotide synthesis. The polypeptide is Thymidine phosphorylase (Salmonella schwarzengrund (strain CVM19633)).